A 230-amino-acid chain; its full sequence is Proteasome subunit beta 2 (230 aa).

Over residues 1 to 10 (MHDPENRLTD) the composition is skewed to basic and acidic residues. The segment at 1 to 29 (MHDPENRLTDAYEPEVGNLPNEDSGRDEE) is disordered. A propeptide spans 1 to 35 (MHDPENRLTDAYEPEVGNLPNEDSGRDEENVVKTG) (removed in mature form; by autocatalysis). Residue Thr-36 is the Nucleophile of the active site.

This sequence belongs to the peptidase T1B family. The 20S proteasome core is composed of 14 alpha and 14 beta subunits that assemble into four stacked heptameric rings, resulting in a barrel-shaped structure. The two inner rings, each composed of seven catalytic beta subunits, are sandwiched by two outer rings, each composed of seven alpha subunits. The catalytic chamber with the active sites is on the inside of the barrel. Has a gated structure, the ends of the cylinder being occluded by the N-termini of the alpha-subunits. Is capped at one or both ends by the proteasome regulatory ATPase, PAN.

It is found in the cytoplasm. The catalysed reaction is Cleavage of peptide bonds with very broad specificity.. Its activity is regulated as follows. The formation of the proteasomal ATPase PAN-20S proteasome complex, via the docking of the C-termini of PAN into the intersubunit pockets in the alpha-rings, triggers opening of the gate for substrate entry. Interconversion between the open-gate and close-gate conformations leads to a dynamic regulation of the 20S proteasome proteolysis activity. Its function is as follows. Component of the proteasome core, a large protease complex with broad specificity involved in protein degradation. This is Proteasome subunit beta 2 from Haloarcula marismortui (strain ATCC 43049 / DSM 3752 / JCM 8966 / VKM B-1809) (Halobacterium marismortui).